Consider the following 1399-residue polypeptide: DNA-directed RNA polymerase subunit beta' (1399 aa).

The Zn(2+) site is built by Cys-70, Cys-72, Cys-85, and Cys-88. Residues Asp-460, Asp-462, and Asp-464 each contribute to the Mg(2+) site. Zn(2+)-binding residues include Cys-814, Cys-888, Cys-895, and Cys-898.

Belongs to the RNA polymerase beta' chain family. In terms of assembly, the RNAP catalytic core consists of 2 alpha, 1 beta, 1 beta' and 1 omega subunit. When a sigma factor is associated with the core the holoenzyme is formed, which can initiate transcription. The cofactor is Mg(2+). It depends on Zn(2+) as a cofactor.

It carries out the reaction RNA(n) + a ribonucleoside 5'-triphosphate = RNA(n+1) + diphosphate. In terms of biological role, DNA-dependent RNA polymerase catalyzes the transcription of DNA into RNA using the four ribonucleoside triphosphates as substrates. The sequence is that of DNA-directed RNA polymerase subunit beta' from Pseudomonas putida (strain ATCC 47054 / DSM 6125 / CFBP 8728 / NCIMB 11950 / KT2440).